A 293-amino-acid polypeptide reads, in one-letter code: Protease HtpX homolog (293 aa).

A run of 2 helical transmembrane segments spans residues 5 to 25 (IFLF…TLRL) and 43 to 63 (ALLV…LAMS). H148 contacts Zn(2+). The active site involves E149. H152 lines the Zn(2+) pocket. 2 helical membrane passes run 159–179 (VTLA…SRII) and 199–219 (FVTS…IVMW). E225 contacts Zn(2+).

This sequence belongs to the peptidase M48B family. The cofactor is Zn(2+).

The protein localises to the cell inner membrane. In Nitrosomonas europaea (strain ATCC 19718 / CIP 103999 / KCTC 2705 / NBRC 14298), this protein is Protease HtpX homolog.